A 325-amino-acid chain; its full sequence is Thiamine-monophosphate kinase (325 aa).

Residues Asp-27 and Asp-44 each contribute to the Mg(2+) site. Residue His-51 coordinates substrate. Mg(2+) is bound at residue Asp-73. Residues Tyr-103, 120–121 (GD), and Arg-147 each bind ATP. Asp-121 lines the Mg(2+) pocket. Mg(2+) is bound at residue Asp-215. Residue Ser-217 participates in ATP binding. Residue Asp-218 coordinates Mg(2+). Substrate is bound by residues Glu-264 and Tyr-321.

This sequence belongs to the thiamine-monophosphate kinase family.

The catalysed reaction is thiamine phosphate + ATP = thiamine diphosphate + ADP. Its pathway is cofactor biosynthesis; thiamine diphosphate biosynthesis; thiamine diphosphate from thiamine phosphate: step 1/1. Catalyzes the ATP-dependent phosphorylation of thiamine-monophosphate (TMP) to form thiamine-pyrophosphate (TPP), the active form of vitamin B1. The chain is Thiamine-monophosphate kinase from Bacillus subtilis (strain 168).